A 287-amino-acid polypeptide reads, in one-letter code: MAGAKEIRSKIASVQNTQKITKAMEMVAASKMRKSQDRMAASRPYAETIRNVIGHLALGNLEYKHPYLEERDVKRVGYLVVSTDRGLCGGLNINLFKKLLADMKSWSDKGVETDLALIGSKAVSFFGSVGGNIVAQVTGMGDNPSVSELIGPVKVMLQAYDEGRLDKLYIVSNKFINTMSQEPLVVQVLPLPPSDDGELKKKSWDYLYEPDPKSLLDTLLRRYVESQVYQGVVENLASEQAARMVAMKAATDNGGSLIKELQLVYNKARQASITQELTEIVGGASAV.

It belongs to the ATPase gamma chain family. As to quaternary structure, F-type ATPases have 2 components, CF(1) - the catalytic core - and CF(0) - the membrane proton channel. CF(1) has five subunits: alpha(3), beta(3), gamma(1), delta(1), epsilon(1). CF(0) has three main subunits: a, b and c.

Its subcellular location is the cell inner membrane. Produces ATP from ADP in the presence of a proton gradient across the membrane. The gamma chain is believed to be important in regulating ATPase activity and the flow of protons through the CF(0) complex. This is ATP synthase gamma chain from Pectobacterium carotovorum subsp. carotovorum (strain PC1).